Consider the following 196-residue polypeptide: Peroxynitrite isomerase (196 aa).

The GXWXGXG motif lies at 46–52 (GVWRGRG). His186 serves as a coordination point for heme b.

Belongs to the nitrobindin family. As to quaternary structure, homodimer. Heme b is required as a cofactor.

It carries out the reaction peroxynitrite = nitrate. It functions in the pathway nitrogen metabolism. Its function is as follows. Heme-binding protein able to scavenge peroxynitrite and to protect free L-tyrosine against peroxynitrite-mediated nitration, by acting as a peroxynitrite isomerase that converts peroxynitrite to nitrate. Therefore, this protein likely plays a role in peroxynitrite sensing and in the detoxification of reactive nitrogen and oxygen species (RNS and ROS, respectively). Is able to bind nitric oxide (NO) in vitro, but may act as a sensor of peroxynitrite levels in vivo. This chain is Peroxynitrite isomerase, found in Salinispora tropica (strain ATCC BAA-916 / DSM 44818 / JCM 13857 / NBRC 105044 / CNB-440).